The sequence spans 519 residues: MTQADNQNPKPMVLIILDGFGESDETTHNAIKEANTPTLDKLFRHYPHTLLEASGRAVGLPDGQMGNSEVGHLHIGGGRKVPQDLTRIDAAIASGEFYENPALIEALEKAKALNKAVHILGLLSPGGVHSRDNQIAALVELAHHCGIKKIYLHAILDGRDTPPKSALLSIEKITDQFHAYGNGKIASLIGRYYAMDRDKRWDRTEKAYDLLTQGTAQFHALTAKEGLMLAYEQGNTDEFVSPTSIHRHNETPITIEDGDVVVFMNFRADRARQLTYAFLDDHFTAFNRQVRPKLSAFVTLTAYAKDIHAAVAFPPLELHNTLGEYLSARGYRQLRIAETEKYAHVTYFLNGGQEAPFNGEDRLLIPSPKVATYDLQPEMSAVEMTNKLVEIIQNDDYDLIVCNFANPDMVGHTGDETATREAIQVIDDCLKRIITALQSVGGEALITADHGNAEKMFDEKTNQPHTAHTSNLVPLIYVGREAQFCKEVGALDDVAPTLLYLMGLEKPREMTGRNLITLK.

Residues Asp-18 and Ser-68 each contribute to the Mn(2+) site. The Phosphoserine intermediate role is filled by Ser-68. Substrate is bound by residues His-129, Arg-159–Asp-160, Arg-191, Arg-197, Arg-267–Arg-270, and Lys-341. Residues Asp-408, His-412, Asp-449, His-450, and His-468 each contribute to the Mn(2+) site.

The protein belongs to the BPG-independent phosphoglycerate mutase family. In terms of assembly, monomer. The cofactor is Mn(2+).

It carries out the reaction (2R)-2-phosphoglycerate = (2R)-3-phosphoglycerate. Its pathway is carbohydrate degradation; glycolysis; pyruvate from D-glyceraldehyde 3-phosphate: step 3/5. In terms of biological role, catalyzes the interconversion of 2-phosphoglycerate and 3-phosphoglycerate. This chain is 2,3-bisphosphoglycerate-independent phosphoglycerate mutase, found in Coxiella burnetii (strain RSA 331 / Henzerling II).